A 361-amino-acid chain; its full sequence is S-adenosylmethionine:tRNA ribosyltransferase-isomerase (361 aa).

The protein belongs to the QueA family. As to quaternary structure, monomer.

It localises to the cytoplasm. It carries out the reaction 7-aminomethyl-7-carbaguanosine(34) in tRNA + S-adenosyl-L-methionine = epoxyqueuosine(34) in tRNA + adenine + L-methionine + 2 H(+). It participates in tRNA modification; tRNA-queuosine biosynthesis. Its function is as follows. Transfers and isomerizes the ribose moiety from AdoMet to the 7-aminomethyl group of 7-deazaguanine (preQ1-tRNA) to give epoxyqueuosine (oQ-tRNA). This Rhizobium johnstonii (strain DSM 114642 / LMG 32736 / 3841) (Rhizobium leguminosarum bv. viciae) protein is S-adenosylmethionine:tRNA ribosyltransferase-isomerase.